We begin with the raw amino-acid sequence, 427 residues long: Glutamate-1-semialdehyde 2,1-aminomutase (427 aa).

Position 264 is an N6-(pyridoxal phosphate)lysine (Lys264).

Belongs to the class-III pyridoxal-phosphate-dependent aminotransferase family. HemL subfamily. Homodimer. Pyridoxal 5'-phosphate is required as a cofactor.

It is found in the cytoplasm. It carries out the reaction (S)-4-amino-5-oxopentanoate = 5-aminolevulinate. It functions in the pathway porphyrin-containing compound metabolism; protoporphyrin-IX biosynthesis; 5-aminolevulinate from L-glutamyl-tRNA(Glu): step 2/2. The sequence is that of Glutamate-1-semialdehyde 2,1-aminomutase from Campylobacter concisus (strain 13826).